Here is a 439-residue protein sequence, read N- to C-terminus: Innexin-19 (439 aa).

The next 4 helical transmembrane spans lie at 33–53 (PLILAVCCLVISAKQYGGTPI), 103–123 (QWVPFILIAEALMFSLPCIFW), 199–219 (IVYSFTKLLYSVNVVAQFFIL), and 285–305 (VFAFLWCWYMILAIITTCSFI).

It belongs to the pannexin family.

It is found in the cell membrane. Its subcellular location is the cell junction. The protein resides in the gap junction. In terms of biological role, structural component of the gap junctions that specifically coordinates left-right asymmetry in the developing nervous system. Acts by forming gap junction network linking embryonic neurons and providing electrical coupling between cells, leading to promote or inhibit AWC signaling. This chain is Innexin-19 (inx-19), found in Caenorhabditis briggsae.